The following is a 1217-amino-acid chain: ATP-dependent helicase/nuclease subunit A (1217 aa).

The UvrD-like helicase ATP-binding domain maps to Val-10–Arg-475. Residue Ala-31–Thr-38 participates in ATP binding. The UvrD-like helicase C-terminal domain occupies Lys-476 to Gly-786.

It belongs to the helicase family. AddA subfamily. In terms of assembly, heterodimer of AddA and AddB/RexB. The cofactor is Mg(2+).

It catalyses the reaction Couples ATP hydrolysis with the unwinding of duplex DNA by translocating in the 3'-5' direction.. It carries out the reaction ATP + H2O = ADP + phosphate + H(+). Functionally, the heterodimer acts as both an ATP-dependent DNA helicase and an ATP-dependent, dual-direction single-stranded exonuclease. Recognizes the chi site generating a DNA molecule suitable for the initiation of homologous recombination. The AddA nuclease domain is required for chi fragment generation; this subunit has the helicase and 3' -&gt; 5' nuclease activities. The protein is ATP-dependent helicase/nuclease subunit A of Staphylococcus aureus (strain USA300).